The following is a 146-amino-acid chain: Leptin (146 aa).

Residues C96 and C146 are joined by a disulfide bond.

The protein belongs to the leptin family.

The protein localises to the secreted. Its function is as follows. Key player in the regulation of energy balance and body weight control. Once released into the circulation, has central and peripheral effects by binding LEPR, found in many tissues, which results in the activation of several major signaling pathways. In the hypothalamus, acts as an appetite-regulating factor that induces a decrease in food intake and an increase in energy consumption by inducing anorexinogenic factors and suppressing orexigenic neuropeptides, also regulates bone mass and secretion of hypothalamo-pituitary-adrenal hormones. In the periphery, increases basal metabolism, influences reproductive function, regulates pancreatic beta-cell function and insulin secretion, is pro-angiogenic for endothelial cell and affects innate and adaptive immunity. In the arcuate nucleus of the hypothalamus, activates by depolarization POMC neurons inducing FOS and SOCS3 expression to release anorexigenic peptides and inhibits by hyperpolarization NPY neurons inducing SOCS3 with a consequent reduction on release of orexigenic peptides. In addition to its known satiety inducing effect, has a modulatory role in nutrient absorption. In the intestine, reduces glucose absorption by enterocytes by activating PKC and leading to a sequential activation of p38, PI3K and ERK signaling pathways which exerts an inhibitory effect on glucose absorption. Acts as a growth factor on certain tissues, through the activation of different signaling pathways increases expression of genes involved in cell cycle regulation such as CCND1, via JAK2-STAT3 pathway, or VEGFA, via MAPK1/3 and PI3K-AKT1 pathways. May also play an apoptotic role via JAK2-STAT3 pathway and up-regulation of BIRC5 expression. Pro-angiogenic, has mitogenic activity on vascular endothelial cells and plays a role in matrix remodeling by regulating the expression of matrix metalloproteinases (MMPs) and tissue inhibitors of metalloproteinases (TIMPs). In innate immunity, modulates the activity and function of neutrophils by increasing chemotaxis and the secretion of oxygen radicals. Increases phagocytosis by macrophages and enhances secretion of pro-inflammatory mediators. Increases cytotoxic ability of NK cells. Plays a pro-inflammatory role, in synergy with IL1B, by inducing NOS2 which promotes the production of IL6, IL8 and Prostaglandin E2, through a signaling pathway that involves JAK2, PI3K, MAP2K1/MEK1 and MAPK14/p38. In adaptive immunity, promotes the switch of memory T-cells towards T helper-1 cell immune responses. Increases CD4(+)CD25(-) T-cell proliferation and reduces autophagy during TCR (T-cell receptor) stimulation, through MTOR signaling pathway activation and BCL2 up-regulation. In Pan troglodytes (Chimpanzee), this protein is Leptin (LEP).